The primary structure comprises 184 residues: GMP synthase [glutamine-hydrolyzing] subunit A (184 aa).

Residues 3 to 184 enclose the Glutamine amidotransferase type-1 domain; sequence PICVVNNYGQ…YENFDAICTE (182 aa). C75 serves as the catalytic Nucleophile. Catalysis depends on residues H162 and E164.

As to quaternary structure, heterodimer composed of a glutamine amidotransferase subunit (A) and a GMP-binding subunit (B).

It carries out the reaction XMP + L-glutamine + ATP + H2O = GMP + L-glutamate + AMP + diphosphate + 2 H(+). It functions in the pathway purine metabolism; GMP biosynthesis; GMP from XMP (L-Gln route): step 1/1. Its function is as follows. Catalyzes the synthesis of GMP from XMP. The sequence is that of GMP synthase [glutamine-hydrolyzing] subunit A from Methanoregula boonei (strain DSM 21154 / JCM 14090 / 6A8).